A 556-amino-acid polypeptide reads, in one-letter code: Double-strand-break repair protein rad21-like protein 1 (556 aa).

It belongs to the rad21 family. Component of some meiotic cohesin complex composed of the SMC1 (SMC1A or SMC1B) and SMC3 heterodimer attached via their hinge domain, RAD21L which link them, and STAG3.

Its subcellular location is the nucleus. It localises to the chromosome. Functionally, meiosis-specific component of some cohesin complex required during the initial steps of prophase I in male meiosis. Probably required during early meiosis in males for separation of sister chromatids and homologous chromosomes. Replaces RAD21 in premeiotic S phase (during early stages of prophase I), while RAD21 reappears in later stages of prophase I. Involved in synaptonemal complex assembly, synapsis initiation and crossover recombination between homologous chromosomes during prophase I. The polypeptide is Double-strand-break repair protein rad21-like protein 1 (RAD21L1) (Homo sapiens (Human)).